The chain runs to 1489 residues: Type-2 histone deacetylase 1 (1489 aa).

Low complexity-rich tracts occupy residues 135-163 (NNNNINNNNNSNGSNSSNNSHNGGSSPSG), 190-259 (SNGN…SRNL), 281-306 (NIINNNSNNNTNNNNNIMNGTTTSTT), and 325-399 (SPTS…NINN). 5 disordered regions span residues 135-259 (NNNN…SRNL), 281-556 (NIIN…NYQQ), 915-935 (NNNNNNNNNNNNNNNEEDDQL), 955-1024 (NISK…RDRD), and 1151-1185 (STGINQFSTSTPITTTGTATVTPGSTTSSTNGEQC). Polar residues predominate over residues 400 to 430 (VANGTPRPSLQTSRLQGKLPSPQQYNTSPSH). 4 stretches are compositionally biased toward low complexity: residues 431–450 (QQYPSPKNNNNSNNIIPIQS), 486–553 (NNNN…NNSN), 915–928 (NNNNNNNNNNNNNN), and 959–988 (NNNNNNNNNNNNNNNNNNNNNNNNNNNNNN). Composition is skewed to basic and acidic residues over residues 989–1001 (RNRDRDREFERDN) and 1010–1024 (IEKERNRNNRIRDRD). The segment covering 1158 to 1180 (STSTPITTTGTATVTPGSTTSST) has biased composition (low complexity). The active-site Proton acceptor is the His1232. Acidic residues predominate over residues 1325-1335 (EQNDYDDDDNN). Residues 1325–1374 (EQNDYDDDDNNNDVNNNNNNNNNNNNNNNNNNNNKNNNNNNSNSITQQST) are disordered. Low complexity predominate over residues 1336–1367 (NDVNNNNNNNNNNNNNNNNNNNNKNNNNNNSN).

The protein belongs to the histone deacetylase family. HD type 2 subfamily.

It localises to the nucleus. The protein resides in the cytoplasm. It catalyses the reaction N(6)-acetyl-L-lysyl-[histone] + H2O = L-lysyl-[histone] + acetate. In terms of biological role, responsible for the deacetylation of lysine residues on the N-terminal part of the core histones (H2A, H2B, H3 and H4). Histone deacetylation plays an important role in transcriptional regulation, cell cycle progression and developmental events. Histone deacetylases act via the formation of large multiprotein complexes. The chain is Type-2 histone deacetylase 1 (hdaD) from Dictyostelium discoideum (Social amoeba).